The primary structure comprises 218 residues: TPA-induced transmembrane protein homolog (218 aa).

Positions 1 to 54 are disordered; that stretch reads MEEGSRSQSPREELELSMLDGPQEELTPLNNDLRIQPNSAEDPSPAQVGKESPW. A helical transmembrane segment spans residues 66 to 86; it reads KLWMVIVTIFLCFIIVIVISL.

The protein resides in the endoplasmic reticulum membrane. This chain is TPA-induced transmembrane protein homolog, found in Mus musculus (Mouse).